The primary structure comprises 488 residues: N-succinylglutamate 5-semialdehyde dehydrogenase (488 aa).

Position 221–226 (221–226) interacts with NAD(+); it reads GSSRTG. Residues glutamate 244 and cysteine 278 contribute to the active site.

It belongs to the aldehyde dehydrogenase family. AstD subfamily.

The enzyme catalyses N-succinyl-L-glutamate 5-semialdehyde + NAD(+) + H2O = N-succinyl-L-glutamate + NADH + 2 H(+). The protein operates within amino-acid degradation; L-arginine degradation via AST pathway; L-glutamate and succinate from L-arginine: step 4/5. Functionally, catalyzes the NAD-dependent reduction of succinylglutamate semialdehyde into succinylglutamate. The sequence is that of N-succinylglutamate 5-semialdehyde dehydrogenase from Pseudomonas fluorescens (strain Pf0-1).